The chain runs to 45 residues: Large ribosomal subunit protein bL34 (45 aa).

A disordered region spans residues 1–45; sequence MTKRTFGGTSRKRKRVSGFRVRMRSHTGRRVIRTRRKRGRSRLAA. The segment covering 10–45 has biased composition (basic residues); the sequence is SRKRKRVSGFRVRMRSHTGRRVIRTRRKRGRSRLAA.

The protein belongs to the bacterial ribosomal protein bL34 family.

The polypeptide is Large ribosomal subunit protein bL34 (Synechococcus sp. (strain CC9311)).